The chain runs to 945 residues: Bifunctional glutamine synthetase adenylyltransferase/adenylyl-removing enzyme (945 aa).

The adenylyl removase stretch occupies residues 1–440 (MMPLSPQLQQ…VFNELIGDDE (440 aa)). An adenylyl transferase region spans residues 449–945 (AEYWRELWQD…SASWQKWLMA (497 aa)).

Belongs to the GlnE family. Mg(2+) is required as a cofactor.

It catalyses the reaction [glutamine synthetase]-O(4)-(5'-adenylyl)-L-tyrosine + phosphate = [glutamine synthetase]-L-tyrosine + ADP. It carries out the reaction [glutamine synthetase]-L-tyrosine + ATP = [glutamine synthetase]-O(4)-(5'-adenylyl)-L-tyrosine + diphosphate. In terms of biological role, involved in the regulation of glutamine synthetase GlnA, a key enzyme in the process to assimilate ammonia. When cellular nitrogen levels are high, the C-terminal adenylyl transferase (AT) inactivates GlnA by covalent transfer of an adenylyl group from ATP to specific tyrosine residue of GlnA, thus reducing its activity. Conversely, when nitrogen levels are low, the N-terminal adenylyl removase (AR) activates GlnA by removing the adenylyl group by phosphorolysis, increasing its activity. The regulatory region of GlnE binds the signal transduction protein PII (GlnB) which indicates the nitrogen status of the cell. The protein is Bifunctional glutamine synthetase adenylyltransferase/adenylyl-removing enzyme of Klebsiella pneumoniae subsp. pneumoniae (strain ATCC 700721 / MGH 78578).